The following is a 102-amino-acid chain: Small ribosomal subunit protein uS10 (102 aa).

It belongs to the universal ribosomal protein uS10 family. In terms of assembly, part of the 30S ribosomal subunit.

In terms of biological role, involved in the binding of tRNA to the ribosomes. In Streptococcus pyogenes serotype M3 (strain SSI-1), this protein is Small ribosomal subunit protein uS10.